The sequence spans 42 residues: Photosystem II reaction center protein J (42 aa).

Residues 10 to 30 form a helical membrane-spanning segment; the sequence is IPLWLVGTVVGLLAIGLLALF.

Belongs to the PsbJ family. As to quaternary structure, PSII is composed of 1 copy each of membrane proteins PsbA, PsbB, PsbC, PsbD, PsbE, PsbF, PsbH, PsbI, PsbJ, PsbK, PsbL, PsbM, PsbT, PsbX, PsbY, PsbZ, Psb30/Ycf12, at least 3 peripheral proteins of the oxygen-evolving complex and a large number of cofactors. It forms dimeric complexes.

Its subcellular location is the plastid. It is found in the chloroplast thylakoid membrane. Its function is as follows. One of the components of the core complex of photosystem II (PSII). PSII is a light-driven water:plastoquinone oxidoreductase that uses light energy to abstract electrons from H(2)O, generating O(2) and a proton gradient subsequently used for ATP formation. It consists of a core antenna complex that captures photons, and an electron transfer chain that converts photonic excitation into a charge separation. This chain is Photosystem II reaction center protein J, found in Mesostigma viride (Green alga).